The chain runs to 177 residues: Peptide methionine sulfoxide reductase MsrA 2 (177 aa).

Cys12 is an active-site residue.

Belongs to the MsrA Met sulfoxide reductase family.

The enzyme catalyses L-methionyl-[protein] + [thioredoxin]-disulfide + H2O = L-methionyl-(S)-S-oxide-[protein] + [thioredoxin]-dithiol. It carries out the reaction [thioredoxin]-disulfide + L-methionine + H2O = L-methionine (S)-S-oxide + [thioredoxin]-dithiol. Has an important function as a repair enzyme for proteins that have been inactivated by oxidation. Catalyzes the reversible oxidation-reduction of methionine sulfoxide in proteins to methionine. This chain is Peptide methionine sulfoxide reductase MsrA 2 (msrA2), found in Staphylococcus aureus (strain NCTC 8325 / PS 47).